We begin with the raw amino-acid sequence, 305 residues long: MTNQTAIVSVEQLTNSSVLNLIERAEAFKQGATCELTRPVYAMNLFFENSTRTKTSFEMAERKLGLSVMSFEAETSSVSKGETLSDTLKTVQAIGVDFVAVRHPQNYYYDDLLADPAFHLALANGGDGSGQHPSQCLLDMMTIHEEFGHFDGLKVVICGDLRHSRVAKSNMQLLKRLGAQLYFAGPEEWFTAEFNDYGQHVALDSILDQVDVVMLLRIQHERFDSAETMTDEAFHVKYGLTAQRAAQLKASTIWLHPAPVNRDVEIADELVEAPQSRIFKQMHNGVFMRMAMIEYLLKQKNLIKD.

Carbamoyl phosphate-binding residues include Arg52 and Thr53. Lys80 provides a ligand contact to L-aspartate. Residues Arg102, His132, and Gln135 each coordinate carbamoyl phosphate. L-aspartate is bound by residues Arg165 and Arg217. Carbamoyl phosphate contacts are provided by Ala258 and Pro259.

This sequence belongs to the aspartate/ornithine carbamoyltransferase superfamily. ATCase family. As to quaternary structure, heterododecamer (2C3:3R2) of six catalytic PyrB chains organized as two trimers (C3), and six regulatory PyrI chains organized as three dimers (R2).

The enzyme catalyses carbamoyl phosphate + L-aspartate = N-carbamoyl-L-aspartate + phosphate + H(+). It participates in pyrimidine metabolism; UMP biosynthesis via de novo pathway; (S)-dihydroorotate from bicarbonate: step 2/3. In terms of biological role, catalyzes the condensation of carbamoyl phosphate and aspartate to form carbamoyl aspartate and inorganic phosphate, the committed step in the de novo pyrimidine nucleotide biosynthesis pathway. This is Aspartate carbamoyltransferase catalytic subunit from Latilactobacillus sakei subsp. sakei (strain 23K) (Lactobacillus sakei subsp. sakei).